The primary structure comprises 346 residues: Methylthioribose-1-phosphate isomerase (346 aa).

Residues 47–49 (RGA), arginine 88, and glutamine 195 each bind substrate. The Proton donor role is filled by aspartate 236. 246–247 (NK) is a binding site for substrate.

Belongs to the eIF-2B alpha/beta/delta subunits family. MtnA subfamily.

The enzyme catalyses 5-(methylsulfanyl)-alpha-D-ribose 1-phosphate = 5-(methylsulfanyl)-D-ribulose 1-phosphate. Its pathway is amino-acid biosynthesis; L-methionine biosynthesis via salvage pathway; L-methionine from S-methyl-5-thio-alpha-D-ribose 1-phosphate: step 1/6. In terms of biological role, catalyzes the interconversion of methylthioribose-1-phosphate (MTR-1-P) into methylthioribulose-1-phosphate (MTRu-1-P). This Maridesulfovibrio salexigens (strain ATCC 14822 / DSM 2638 / NCIMB 8403 / VKM B-1763) (Desulfovibrio salexigens) protein is Methylthioribose-1-phosphate isomerase.